The following is a 448-amino-acid chain: Serine/threonine-protein phosphatase 2A regulatory subunit B'' subunit gamma (448 aa).

2 consecutive EF-hand domains span residues 268-303 and 336-371; these read PSAL…TLTC and KEPA…IQEQ. The Ca(2+) site is built by D281, D283, N285, M287, and E292.

The protein localises to the nucleus. It is found in the cytoplasm. Functionally, possible role in the regulation of cell death. The protein is Serine/threonine-protein phosphatase 2A regulatory subunit B'' subunit gamma (ppp2r3c) of Xenopus tropicalis (Western clawed frog).